A 121-amino-acid chain; its full sequence is UPF0102 protein Hhal_2103 (121 aa).

Residues 1 to 20 (MMAPQTTRNDPRQRGQEAEE) are disordered. The segment covering 9–20 (NDPRQRGQEAEE) has biased composition (basic and acidic residues).

This sequence belongs to the UPF0102 family.

This is UPF0102 protein Hhal_2103 from Halorhodospira halophila (strain DSM 244 / SL1) (Ectothiorhodospira halophila (strain DSM 244 / SL1)).